Reading from the N-terminus, the 386-residue chain is O-methyltransferase 10 (386 aa).

Serine 207, glycine 231, aspartate 254, aspartate 274, and lysine 288 together coordinate S-adenosyl-L-homocysteine. Aspartate 254 is an S-adenosyl-L-methionine binding site. The active-site Proton acceptor is histidine 292.

The protein belongs to the class I-like SAM-binding methyltransferase superfamily. Cation-independent O-methyltransferase family. Homodimer.

It carries out the reaction dopamine + S-adenosyl-L-methionine = 4-methoxytyramine + S-adenosyl-L-homocysteine + H(+). It catalyses the reaction 3,4-dihydroxy-5-methoxyphenethylamine + S-adenosyl-L-methionine = 3-hydroxy-4,5-dimethoxyphenethylamine + S-adenosyl-L-homocysteine + H(+). The catalysed reaction is 3-hydroxy-4,5-dimethoxyphenethylamine + S-adenosyl-L-methionine = mescaline + S-adenosyl-L-homocysteine + H(+). The enzyme catalyses 4-hydroxy-3,5-dimethoxyphenethylamine + S-adenosyl-L-methionine = mescaline + S-adenosyl-L-homocysteine + H(+). The protein operates within aromatic compound metabolism. Its pathway is alkaloid biosynthesis. Functionally, O-methyltransferase participating in the biosynthesis of natural products derived from phenylethylamine, including mescaline, a natural hallucinogen potentially used in psychotherapeutic treatments. Catalyzes the O-methylation of mescaline para hydroxyl groups, using dopamine, 3,4-dihydroxy-5-methoxyphenethylamine, 3-hydroxy-4,5-dimethoxyphenethylamine and 4-hydroxy-3,5-dimethoxyphenethylamine as substrates. This is O-methyltransferase 10 from Lophophora williamsii (Peyote).